The primary structure comprises 295 residues: ATP synthase gamma chain (295 aa).

It belongs to the ATPase gamma chain family. F-type ATPases have 2 components, CF(1) - the catalytic core - and CF(0) - the membrane proton channel. CF(1) has five subunits: alpha(3), beta(3), gamma(1), delta(1), epsilon(1). CF(0) has three main subunits: a, b and c.

It is found in the cell membrane. In terms of biological role, produces ATP from ADP in the presence of a proton gradient across the membrane. The gamma chain is believed to be important in regulating ATPase activity and the flow of protons through the CF(0) complex. This is ATP synthase gamma chain from Caldanaerobacter subterraneus subsp. tengcongensis (strain DSM 15242 / JCM 11007 / NBRC 100824 / MB4) (Thermoanaerobacter tengcongensis).